Reading from the N-terminus, the 201-residue chain is 3-isopropylmalate dehydratase small subunit (201 aa).

The protein belongs to the LeuD family. LeuD type 1 subfamily. As to quaternary structure, heterodimer of LeuC and LeuD.

The enzyme catalyses (2R,3S)-3-isopropylmalate = (2S)-2-isopropylmalate. It functions in the pathway amino-acid biosynthesis; L-leucine biosynthesis; L-leucine from 3-methyl-2-oxobutanoate: step 2/4. Functionally, catalyzes the isomerization between 2-isopropylmalate and 3-isopropylmalate, via the formation of 2-isopropylmaleate. This is 3-isopropylmalate dehydratase small subunit from Rhodopseudomonas palustris (strain HaA2).